A 468-amino-acid polypeptide reads, in one-letter code: Uronate isomerase (468 aa).

The protein belongs to the metallo-dependent hydrolases superfamily. Uronate isomerase family.

The catalysed reaction is D-glucuronate = D-fructuronate. The enzyme catalyses aldehydo-D-galacturonate = keto-D-tagaturonate. It functions in the pathway carbohydrate metabolism; pentose and glucuronate interconversion. This Bacteroides fragilis (strain ATCC 25285 / DSM 2151 / CCUG 4856 / JCM 11019 / LMG 10263 / NCTC 9343 / Onslow / VPI 2553 / EN-2) protein is Uronate isomerase.